A 594-amino-acid chain; its full sequence is Glutamate decarboxylase 1 (594 aa).

Low complexity predominate over residues 1–13; the sequence is MASSTPSSSATSS. A disordered region spans residues 1 to 22; that stretch reads MASSTPSSSATSSNAGADPNTA. Phosphoserine is present on S78. 190-192 contacts 4-aminobutanoate; sequence QLS. K405 carries the post-translational modification N6-(pyridoxal phosphate)lysine. R567 provides a ligand contact to 4-aminobutanoate.

This sequence belongs to the group II decarboxylase family. Homodimer. Requires pyridoxal 5'-phosphate as cofactor.

The enzyme catalyses L-glutamate + H(+) = 4-aminobutanoate + CO2. In terms of biological role, catalyzes the synthesis of the inhibitory neurotransmitter gamma-aminobutyric acid (GABA) with pyridoxal 5'-phosphate as cofactor. The polypeptide is Glutamate decarboxylase 1 (GAD1) (Canis lupus familiaris (Dog)).